A 428-amino-acid polypeptide reads, in one-letter code: Adenylosuccinate synthetase (428 aa).

GTP is bound by residues 12–18 and 40–42; these read GDEGKGK and GHT. Asp13 serves as the catalytic Proton acceptor. Positions 13 and 40 each coordinate Mg(2+). IMP is bound by residues 13–16, 38–41, Thr129, Arg143, Gln224, Thr239, and Arg303; these read DEGK and NAGH. The active-site Proton donor is the His41. 299 to 305 provides a ligand contact to substrate; that stretch reads VTTGRIR. GTP is bound by residues Arg305, 331–333, and 410–412; these read KVD and AYG.

The protein belongs to the adenylosuccinate synthetase family. In terms of assembly, homodimer. Requires Mg(2+) as cofactor.

It localises to the cytoplasm. It carries out the reaction IMP + L-aspartate + GTP = N(6)-(1,2-dicarboxyethyl)-AMP + GDP + phosphate + 2 H(+). The protein operates within purine metabolism; AMP biosynthesis via de novo pathway; AMP from IMP: step 1/2. Functionally, plays an important role in the de novo pathway of purine nucleotide biosynthesis. Catalyzes the first committed step in the biosynthesis of AMP from IMP. This chain is Adenylosuccinate synthetase, found in Francisella tularensis subsp. mediasiatica (strain FSC147).